We begin with the raw amino-acid sequence, 417 residues long: Carbohydrate sulfotransferase 8 (417 aa).

Residues 1–10 are Cytoplasmic-facing; sequence MTPRLGTMRL. The helical; Signal-anchor for type II membrane protein transmembrane segment at 11–31 threads the bilayer; sequence ACMFSSILLFGAAGLLLFISL. The Lumenal segment spans residues 32–417; the sequence is QDPIELSPQQ…NYSKPFSDLY (386 aa). The segment at 47-101 is disordered; the sequence is FSIRPQQPQHDSHLRISTEKGTRDSPSGSPRGLQLQAPDQPRPHPKAAGSPLRLR. A compositionally biased stretch (basic and acidic residues) spans 56-69; sequence HDSHLRISTEKGTR. 2 N-linked (GlcNAc...) asparagine glycosylation sites follow: Asn121 and Asn122. Residues 191–197 and 251–259 each bind 3'-phosphoadenylyl sulfate; these read PKAGCSN and REPFERLVS. 3 N-linked (GlcNAc...) asparagine glycosylation sites follow: Asn287, Asn360, and Asn408.

This sequence belongs to the sulfotransferase 2 family. In terms of tissue distribution, strongly expressed in brain. Weakly expressed in lung and kidney. Weakly expressed in pituitary.

Its subcellular location is the golgi apparatus membrane. Catalyzes the transfer of sulfate to position 4 of non-reducing N-acetylgalactosamine (GalNAc) residues in both N-glycans and O-glycans. Required for biosynthesis of glycoprotein hormones lutropin and thyrotropin, by mediating sulfation of their carbohydrate structures. Only active against terminal GalNAcbeta1,GalNAcbeta. Not active toward chondroitin. This Mus musculus (Mouse) protein is Carbohydrate sulfotransferase 8 (Chst8).